A 352-amino-acid polypeptide reads, in one-letter code: Ion-translocating oxidoreductase complex subunit D (352 aa).

The next 4 membrane-spanning stretches (helical) occupy residues 20–40, 42–62, 89–109, and 123–143; these read IMLL…WFFG, GTLV…ALVL, IPPL…AIIA, and PAMI…TSWL. Threonine 187 is subject to FMN phosphoryl threonine. Helical transmembrane passes span 214–234, 242–262, 267–287, 301–321, and 322–342; these read ILAG…GLWL, WHIP…GWLF, LAAP…FFIL, LIFG…GGYP, and DGVA…DYYT.

This sequence belongs to the NqrB/RnfD family. The complex is composed of six subunits: RsxA, RsxB, RsxC, RsxD, RsxE and RsxG. FMN serves as cofactor.

It is found in the cell inner membrane. Part of a membrane-bound complex that couples electron transfer with translocation of ions across the membrane. Required to maintain the reduced state of SoxR. The protein is Ion-translocating oxidoreductase complex subunit D of Escherichia coli (strain ATCC 8739 / DSM 1576 / NBRC 3972 / NCIMB 8545 / WDCM 00012 / Crooks).